A 422-amino-acid chain; its full sequence is Testin (422 aa).

One can recognise a PET domain in the interval Met-92–Asp-199. 2 disordered regions span residues Gln-135 to Ser-162 and Leu-194 to Ser-226. Residues Leu-194 to Asp-212 show a composition bias toward basic and acidic residues. LIM zinc-binding domains are found at residues Tyr-234 to Glu-297, Pro-299 to Val-359, and Gln-362 to Ser-422.

It belongs to the prickle / espinas / testin family. Interacts via LIM domain 1 with ZYX. Interacts (via LIM domain 3) with ENAH and VASP. Interacts with ALKBH4, talin, actin, alpha-actinin, GRIP1 and PXN. Interacts (via LIM domain 2) with ACTL7A (via N-terminus). Heterodimer with ACTL7A; the heterodimer interacts with ENAH to form a heterotrimer.

The protein resides in the cytoplasm. The protein localises to the cell junction. Its subcellular location is the focal adhesion. In terms of biological role, scaffold protein that may play a role in cell adhesion, cell spreading and in the reorganization of the actin cytoskeleton. Plays a role in the regulation of cell proliferation. May act as a tumor suppressor. This Monodelphis domestica (Gray short-tailed opossum) protein is Testin (TES).